Consider the following 24-residue polypeptide: Brevinin-1Ba (24 aa).

A disulfide bridge connects residues C18 and C24.

As to expression, expressed by the skin glands.

The protein localises to the secreted. Functionally, antibacterial activity against Gram-positive bacterium S.aureus. This chain is Brevinin-1Ba, found in Lithobates berlandieri (Rio Grande leopard frog).